A 470-amino-acid chain; its full sequence is Acetyl-CoA decarbonylase/synthase complex subunit gamma 2 (470 aa).

One can recognise a 4Fe-4S domain in the interval 1-60 (MKINSPLEAYKYLPQTNCGECGQPTCMAFASTLIDRSGKTTDCPPLIKEKKFAKKLAELD). Residues Cys-18, Cys-21, Cys-26, and Cys-43 each coordinate [4Fe-4S] cluster.

Heterodimer of delta and gamma chains. The ACDS complex is made up of alpha, epsilon, beta, gamma and delta chains with a probable stoichiometry of (alpha(2)epsilon(2))(4)-beta(8)-(gamma(1)delta(1))(8). Corrinoid serves as cofactor. [4Fe-4S] cluster is required as a cofactor.

The catalysed reaction is 5,6,7,8-tetrahydrosarcinapterin + methyl-Co(III)-[corrinoid Fe-S protein] = 5-methyltetrahydrosarcinapterin + Co(I)-[corrinoid Fe-S protein] + H(+). Its pathway is one-carbon metabolism; methanogenesis from acetate. Functionally, part of a complex that catalyzes the reversible cleavage of acetyl-CoA, allowing growth on acetate as sole source of carbon and energy. This is Acetyl-CoA decarbonylase/synthase complex subunit gamma 2 from Methanosarcina mazei (strain ATCC BAA-159 / DSM 3647 / Goe1 / Go1 / JCM 11833 / OCM 88) (Methanosarcina frisia).